We begin with the raw amino-acid sequence, 143 residues long: Small ribosomal subunit protein uS12 (143 aa).

Over residues 1–19 (MGKPRGLRTARKHVNHRRD) the composition is skewed to basic residues. A disordered region spans residues 1-23 (MGKPRGLRTARKHVNHRRDQRWA). Pro62 carries the post-translational modification 3-hydroxyproline.

Belongs to the universal ribosomal protein uS12 family. As to quaternary structure, component of the 40S small ribosomal subunit. Hydroxylation at Pro-62 affects translation termination efficiency.

It is found in the cytoplasm. It localises to the cytosol. The protein localises to the rough endoplasmic reticulum. The chain is Small ribosomal subunit protein uS12 (RpS23) from Drosophila melanogaster (Fruit fly).